The following is a 259-amino-acid chain: Cysteine protease IpaJ (259 aa).

Catalysis depends on residues Cys-64, His-206, and Asp-218.

It localises to the secreted. The protein localises to the host cytoplasm. In terms of biological role, virulence factor that eliminates N-myristoyl protein modifications in infected host cells. Acts as a cysteine protease that cleaves the peptide bond between N-myristoylated Gly-2 and Asn-3 of human ARF1, leading to the elimination of the myristoyl group and alteration of protein trafficking in host cell. Could also cleave an array of N-myristoylated host proteins involved in cellular growth, signal transduction, autophagasome maturation and organelle function. This Shigella flexneri protein is Cysteine protease IpaJ (ipaJ).